The sequence spans 560 residues: Nibrin homolog (560 aa).

Residues 25-87 form the FHA domain; it reads YKVGRKDCDV…YGTFFNKVQG (63 aa). The 76-residue stretch at 115–190 folds into the BRCT domain; it reads TFRLSFVPIV…KQIVLGDWFK (76 aa).

It belongs to the Nibrin family. Component of the MRN complex composed of two heterodimers RAD50 and MRE11 associated with a single NBS1. Mostly expressed in the shoot apex and young flower, but also in young leaves, root tips and stamen, tissues where frequent cell division or meiosis may occur.

The protein localises to the nucleus. It localises to the chromosome. Component of the MRN complex, which plays a central role in double-strand break (DSB) repair, DNA recombination, maintenance of telomere integrity and meiosis. The MRN complex is involved in the repair of DNA double-strand breaks (DSBs) via homologous recombination (HR), an error-free mechanism which primarily occurs during S and G2 phases. The complex (1) mediates the end resection of damaged DNA, which generates proper single-stranded DNA, a key initial steps in HR, and is (2) required for the recruitment of other repair factors and efficient activation of ATM and ATR upon DNA damage. The MRN complex possesses single-strand endonuclease activity and double-strand-specific 3'-5' exonuclease activity, which are provided by MRE11, to initiate end resection, which is required for single-strand invasion and recombination. Within the MRN complex, NBS1 acts as a protein-protein adapter, which specifically recognizes and binds phosphorylated proteins, promoting their recruitment to DNA damage sites. Recruits MRE11 and RAD50 components of the MRN complex to DSBs in response to DNA damage. In Oryza sativa subsp. japonica (Rice), this protein is Nibrin homolog.